A 160-amino-acid polypeptide reads, in one-letter code: Cyclic pyranopterin monophosphate synthase (160 aa).

Substrate-binding positions include 77-79 and 114-115; these read MCH and ME. Residue Asp129 is part of the active site.

The protein belongs to the MoaC family. As to quaternary structure, homohexamer; trimer of dimers.

The enzyme catalyses (8S)-3',8-cyclo-7,8-dihydroguanosine 5'-triphosphate = cyclic pyranopterin phosphate + diphosphate. It functions in the pathway cofactor biosynthesis; molybdopterin biosynthesis. Catalyzes the conversion of (8S)-3',8-cyclo-7,8-dihydroguanosine 5'-triphosphate to cyclic pyranopterin monophosphate (cPMP). This Listeria monocytogenes serotype 4a (strain HCC23) protein is Cyclic pyranopterin monophosphate synthase.